The primary structure comprises 388 residues: Processive diacylglycerol beta-glucosyltransferase (388 aa).

Belongs to the glycosyltransferase 28 family. UgtP subfamily.

It localises to the cell membrane. The catalysed reaction is a 1,2-diacyl-3-O-(beta-D-glucopyranosyl)-sn-glycerol + UDP-alpha-D-glucose = a 1,2-diacyl-3-O-(beta-D-Glc-(1-&gt;6)-beta-D-Glc)-sn-glycerol + UDP + H(+). It catalyses the reaction a 1,2-diacyl-3-O-(beta-D-Glc-(1-&gt;6)-beta-D-Glc)-sn-glycerol + UDP-alpha-D-glucose = a 1,2-diacyl-3-O-(beta-D-Glc-(1-&gt;6)-beta-D-Glc-(1-&gt;6)-beta-D-Glc)-sn-glycerol + UDP + H(+). It carries out the reaction a 1,2-diacyl-sn-glycerol + UDP-alpha-D-glucose = a 1,2-diacyl-3-O-(beta-D-glucopyranosyl)-sn-glycerol + UDP + H(+). Its pathway is glycolipid metabolism; diglucosyl-diacylglycerol biosynthesis. Processive glucosyltransferase involved in the biosynthesis of both the bilayer- and non-bilayer-forming membrane glucolipids. Is able to successively transfer up to three glucosyl residues to diacylglycerol (DAG), thereby catalyzing the formation of beta-monoglucosyl-DAG (3-O-(beta-D-glucopyranosyl)-1,2-diacyl-sn-glycerol), beta-diglucosyl-DAG (3-O-(beta-D-glucopyranosyl-beta-(1-&gt;6)-D-glucopyranosyl)-1,2-diacyl-sn-glycerol) and beta-triglucosyl-DAG (3-O-(beta-D-glucopyranosyl-beta-(1-&gt;6)-D-glucopyranosyl-beta-(1-&gt;6)-D-glucopyranosyl)-1,2-diacyl-sn-glycerol). Beta-diglucosyl-DAG is the predominant glycolipid found in Bacillales and is also used as a membrane anchor for lipoteichoic acid (LTA). The chain is Processive diacylglycerol beta-glucosyltransferase from Bacillus anthracis (strain A0248).